We begin with the raw amino-acid sequence, 248 residues long: Prepilin leader peptidase/N-methyltransferase (248 aa).

The helical transmembrane segment at 1 to 21 (MLSILFIFGLILGSFYYTAGC) threads the bilayer. Positions 36, 39, 61, and 64 each coordinate Zn(2+). Transmembrane regions (helical) follow at residues 68–88 (ISFMYPAAELVTACLFAAAGI), 90–110 (FGISLELFPAVVFISLLIIVA), 114–134 (IHFMLIPNRILIFFLPFLAAA), 143–163 (WYAGLLGAAAGFLFLAVIAAI), 178–198 (VIGFVLGVKMLAAAFFFSVLI), and 223–243 (AIAAGSILAYLYGDSIISFYI).

This sequence belongs to the peptidase A24 family. Zn(2+) serves as cofactor.

It localises to the cell membrane. It catalyses the reaction Typically cleaves a -Gly-|-Phe- bond to release an N-terminal, basic peptide of 5-8 residues from type IV prepilin, and then N-methylates the new N-terminal amino group, the methyl donor being S-adenosyl-L-methionine.. In terms of biological role, plays a role in type II pseudopili formation by proteolytically removing the leader sequence from substrate proteins and subsequently monomethylating the alpha-amino group of the newly exposed N-terminal phenylalanine. Substrates include proteins required for biogenesis of the type II general secretory apparatus. The sequence is that of Prepilin leader peptidase/N-methyltransferase (comC) from Bacillus subtilis (strain 168).